Here is a 624-residue protein sequence, read N- to C-terminus: Fibronectin type III domain-containing protein 2 (624 aa).

A signal peptide spans 1–19 (MREQFSVLVISLLFSSSYG). Fibronectin type-III domains are found at residues 131–236 (PPQN…TPDI), 240–330 (EPTN…TDVF), 334–430 (MPRF…TVPT), 431–524 (VPRE…PKRD), and 527–624 (VPPN…WPGR).

In terms of tissue distribution, prismatic layer of shell (at protein level).

The protein localises to the secreted. This chain is Fibronectin type III domain-containing protein 2, found in Margaritifera margaritifera (Freshwater pearl mussel).